A 320-amino-acid polypeptide reads, in one-letter code: Ferrochelatase (320 aa).

H194 and E275 together coordinate Fe cation.

Belongs to the ferrochelatase family. In terms of assembly, monomer.

The protein localises to the cytoplasm. The enzyme catalyses heme b + 2 H(+) = protoporphyrin IX + Fe(2+). Its pathway is porphyrin-containing compound metabolism; protoheme biosynthesis; protoheme from protoporphyrin-IX: step 1/1. Catalyzes the ferrous insertion into protoporphyrin IX. This Salmonella dublin (strain CT_02021853) protein is Ferrochelatase.